A 485-amino-acid chain; its full sequence is MHAFLGNAQLPSTPRGDRLEFSEWYAEVLRSAEIMDVRYPVKGMYVWLPYGFEIRQRVVEKLRRKLRETGHEEVLFPTLIPETQLKKESEHIAGFEDEVYWVTHGGLKELDEKLALRPTSETAIYPMFALWIRSHADLPLKIFQIVNTFRYETKHTRPLIRMREITTFKEAHTAHATEEEAEEQVKEAVEIYSSFFDELGIPYIASVRPEWDKFPGAEYTVAFDTLMPDGRTLQIGTVHMLGQNFARTFEVTYETEEGDQEYVYMTCYGISDRVVASMIAIHGDERGLVLPPDVAPYQVVMVPILKKGVRRKILERAAEVEEMLREEGVRVKVDDRDMSPGRKFHYWELKGVPLRIELGARELEEGTAVVFRRDELERETYAFEELPDVVPELLEDIAMELRKRAREKFEKGIFRTDSPEEARRLVGEGIVETGWCGSERCGVRMEEEFGGDVLGTPYPEEDTEFERCPICGETAEYTVRIAKTY.

The protein belongs to the class-II aminoacyl-tRNA synthetase family. ProS type 3 subfamily. In terms of assembly, homodimer.

The protein localises to the cytoplasm. The catalysed reaction is tRNA(Pro) + L-proline + ATP = L-prolyl-tRNA(Pro) + AMP + diphosphate. In terms of biological role, catalyzes the attachment of proline to tRNA(Pro) in a two-step reaction: proline is first activated by ATP to form Pro-AMP and then transferred to the acceptor end of tRNA(Pro). This Methanopyrus kandleri (strain AV19 / DSM 6324 / JCM 9639 / NBRC 100938) protein is Proline--tRNA ligase.